Consider the following 227-residue polypeptide: Fibrillarin-like rRNA/tRNA 2'-O-methyltransferase (227 aa).

S-adenosyl-L-methionine-binding positions include 86 to 87, 105 to 106, 130 to 131, and 150 to 153; these read TT, EF, DA, and DVAQ.

The protein belongs to the methyltransferase superfamily. Fibrillarin family. In terms of assembly, interacts with nop5. Component of box C/D small ribonucleoprotein (sRNP) particles that contain rpl7ae, FlpA and nop5, plus a guide RNA. These sRNP particles form homodimers, giving rise to an asymmetric holoenzyme.

In terms of biological role, involved in pre-rRNA and tRNA processing. Utilizes the methyl donor S-adenosyl-L-methionine to catalyze the site-specific 2'-hydroxyl methylation of ribose moieties in rRNA and tRNA. Site specificity is provided by a guide RNA that base pairs with the substrate. Methylation occurs at a characteristic distance from the sequence involved in base pairing with the guide RNA. This Pyrococcus furiosus (strain ATCC 43587 / DSM 3638 / JCM 8422 / Vc1) protein is Fibrillarin-like rRNA/tRNA 2'-O-methyltransferase.